The primary structure comprises 409 residues: Elongation factor Tu, chloroplastic (409 aa).

The region spanning 10–214 (KPHVNIGTIG…KIDEYIPTPE (205 aa)) is the tr-type G domain. The interval 19–26 (GHVDHGKT) is G1. Residue 19-26 (GHVDHGKT) coordinates GTP. T26 contributes to the Mg(2+) binding site. Residues 60 to 64 (GITIN) form a G2 region. The segment at 81 to 84 (DCPG) is G3. GTP-binding positions include 81–85 (DCPGH) and 136–139 (NKAD). A G4 region spans residues 136–139 (NKAD). The interval 174-176 (SAL) is G5.

The protein belongs to the TRAFAC class translation factor GTPase superfamily. Classic translation factor GTPase family. EF-Tu/EF-1A subfamily.

The protein localises to the plastid. It localises to the chloroplast. It carries out the reaction GTP + H2O = GDP + phosphate + H(+). Functionally, GTP hydrolase that promotes the GTP-dependent binding of aminoacyl-tRNA to the A-site of ribosomes during protein biosynthesis. This is Elongation factor Tu, chloroplastic (tufA) from Rhodomonas salina (Cryptomonas salina).